Consider the following 293-residue polypeptide: Ribosomal protein L11 methyltransferase (293 aa).

Residues Thr145, Gly166, Asp188, and Asn230 each coordinate S-adenosyl-L-methionine.

Belongs to the methyltransferase superfamily. PrmA family.

It localises to the cytoplasm. The enzyme catalyses L-lysyl-[protein] + 3 S-adenosyl-L-methionine = N(6),N(6),N(6)-trimethyl-L-lysyl-[protein] + 3 S-adenosyl-L-homocysteine + 3 H(+). Methylates ribosomal protein L11. The polypeptide is Ribosomal protein L11 methyltransferase (Actinobacillus pleuropneumoniae serotype 7 (strain AP76)).